A 586-amino-acid polypeptide reads, in one-letter code: A-type ATP synthase subunit A (586 aa).

233-240 is an ATP binding site; that stretch reads GPFGSGKT.

The protein belongs to the ATPase alpha/beta chains family. As to quaternary structure, has multiple subunits with at least A(3), B(3), C, D, E, F, H, I and proteolipid K(x).

The protein localises to the cell membrane. The enzyme catalyses ATP + H2O + 4 H(+)(in) = ADP + phosphate + 5 H(+)(out). In terms of biological role, component of the A-type ATP synthase that produces ATP from ADP in the presence of a proton gradient across the membrane. The A chain is the catalytic subunit. The chain is A-type ATP synthase subunit A from Methanococcus aeolicus (strain ATCC BAA-1280 / DSM 17508 / OCM 812 / Nankai-3).